A 132-amino-acid polypeptide reads, in one-letter code: Small ribosomal subunit protein uS8 (132 aa).

Belongs to the universal ribosomal protein uS8 family. In terms of assembly, part of the 30S ribosomal subunit. Contacts proteins S5 and S12.

One of the primary rRNA binding proteins, it binds directly to 16S rRNA central domain where it helps coordinate assembly of the platform of the 30S subunit. This chain is Small ribosomal subunit protein uS8, found in Borreliella afzelii (strain PKo) (Borrelia afzelii).